A 339-amino-acid polypeptide reads, in one-letter code: Ferrochelatase (339 aa).

H202 and E283 together coordinate Fe cation.

This sequence belongs to the ferrochelatase family.

The protein localises to the cytoplasm. The enzyme catalyses heme b + 2 H(+) = protoporphyrin IX + Fe(2+). It participates in porphyrin-containing compound metabolism; protoheme biosynthesis; protoheme from protoporphyrin-IX: step 1/1. Its function is as follows. Catalyzes the ferrous insertion into protoporphyrin IX. The polypeptide is Ferrochelatase (Psychrobacter sp. (strain PRwf-1)).